The sequence spans 334 residues: Cathepsin K (334 aa).

Positions 1–19 are cleaved as a signal peptide; the sequence is MLRLHWLALLVLLLPMAAA. A propeptide spans 20–119 (activation peptide); it reads QLRPEPELDA…TLYVPDWSSR (100 aa). N-linked (GlcNAc...) asparagine glycosylation is present at asparagine 108. Intrachain disulfides connect cysteine 141–cysteine 182, cysteine 175–cysteine 215, and cysteine 274–cysteine 323. The active site involves cysteine 144. Active-site residues include histidine 281 and asparagine 301.

Belongs to the peptidase C1 family.

The enzyme catalyses Broad proteolytic activity. With small-molecule substrates and inhibitors, the major determinant of specificity is P2, which is preferably Leu, Met &gt; Phe, and not Arg.. Closely involved in osteoclastic bone resorption and may participate partially in the disorder of bone remodeling. Displays potent endoprotease activity against fibrinogen at acid pH. May play an important role in extracellular matrix degradation. This is Cathepsin K (CTSK) from Gallus gallus (Chicken).